The chain runs to 2242 residues: Large tegument protein deneddylase (2242 aa).

The deubiquitination activity stretch occupies residues 1 to 238 (MKVTQASCHQ…IDLTGVVRES (238 aa)). One can recognise a Peptidase C76 domain in the interval 4–226 (TQASCHQGDI…AARLVSTYRD (223 aa)). Active-site residues include Cys24, Asp160, and His162. Residues 239–318 (ADTAATTTTA…KTLATASSSS (80 aa)) form a disordered region. A compositionally biased stretch (low complexity) spans 240–250 (DTAATTTTAAP). Pro residues predominate over residues 251–268 (SLPPLPDPIVDPGCPPGV). The span at 304–318 (PSTTSKTLATASSSS) shows a compositional bias: low complexity. Residues 328-332 (SSAVP) form an interaction with inner tegument protein region. The span at 1173–1190 (SQQKMEGQLQETRQQMTE) shows a compositional bias: polar residues. Positions 1173–1229 (SQQKMEGQLQETRQQMTETSERLDRSLRQDPGSSSVTRVPEKPFKGQELAGRITPPP) are disordered. Over residues 1191–1200 (TSERLDRSLR) the composition is skewed to basic and acidic residues.

Belongs to the herpesviridae large tegument protein family. Interacts with host CUL1 and CUL4A; these interactions inhibit the E3 ligase activity of cullins. Interacts with inner tegument protein. Interacts with capsid vertex specific component CVC2. Interacts with the major capsid protein/MCP.

It localises to the virion tegument. The protein localises to the host cytoplasm. Its subcellular location is the host nucleus. The enzyme catalyses Thiol-dependent hydrolysis of ester, thioester, amide, peptide and isopeptide bonds formed by the C-terminal Gly of ubiquitin (a 76-residue protein attached to proteins as an intracellular targeting signal).. In terms of biological role, large tegument protein that plays multiple roles in the viral cycle. During viral entry, remains associated with the capsid while most of the tegument is detached and participates in the capsid transport toward the host nucleus. Plays a role in the routing of the capsid at the nuclear pore complex and subsequent uncoating. Within the host nucleus, acts as a deneddylase and promotes the degradation of nuclear CRLs (cullin-RING ubiquitin ligases) and thereby stabilizes nuclear CRL substrates, while cytoplasmic CRLs remain unaffected. These modifications prevent host cell cycle S-phase progression and create a favorable environment allowing efficient viral genome replication. Participates later in the secondary envelopment of capsids. Indeed, plays a linker role for the association of the outer viral tegument to the capsids together with the inner tegument protein. The protein is Large tegument protein deneddylase of Homo sapiens (Human).